Consider the following 718-residue polypeptide: Threonine--tRNA ligase, mitochondrial (718 aa).

The residue at position 52 (Ser-52) is a Phosphoserine. The region spanning 55-121 (QKEPRTIKIS…ETDSDLRFLT (67 aa)) is the TGS domain.

It belongs to the class-II aminoacyl-tRNA synthetase family. Homodimer.

It is found in the mitochondrion matrix. It carries out the reaction tRNA(Thr) + L-threonine + ATP = L-threonyl-tRNA(Thr) + AMP + diphosphate + H(+). In terms of biological role, catalyzes the attachment of threonine to tRNA(Thr) in a two-step reaction: threonine is first activated by ATP to form Thr-AMP and then transferred to the acceptor end of tRNA(Thr). Also edits incorrectly charged tRNA(Thr) via its editing domain. In Homo sapiens (Human), this protein is Threonine--tRNA ligase, mitochondrial (TARS2).